The chain runs to 375 residues: Histidine biosynthesis bifunctional protein HisB (375 aa).

A histidinol-phosphatase region spans residues 1–168 (MTPILFVDRD…GIAHELADAP (168 aa)). Asp8 functions as the Nucleophile in the catalytic mechanism. Asp8, Asp10, and Asp128 together coordinate Mg(2+). Asp10 acts as the Proton donor in catalysis. The imidazoleglycerol-phosphate dehydratase stretch occupies residues 169–375 (RRALVQRNTK…TALPTTKGTL (207 aa)).

The protein in the N-terminal section; belongs to the histidinol-phosphatase family. In the C-terminal section; belongs to the imidazoleglycerol-phosphate dehydratase family. Mg(2+) is required as a cofactor.

It localises to the cytoplasm. It carries out the reaction D-erythro-1-(imidazol-4-yl)glycerol 3-phosphate = 3-(imidazol-4-yl)-2-oxopropyl phosphate + H2O. The catalysed reaction is L-histidinol phosphate + H2O = L-histidinol + phosphate. It participates in amino-acid biosynthesis; L-histidine biosynthesis; L-histidine from 5-phospho-alpha-D-ribose 1-diphosphate: step 6/9. The protein operates within amino-acid biosynthesis; L-histidine biosynthesis; L-histidine from 5-phospho-alpha-D-ribose 1-diphosphate: step 8/9. In Xanthomonas axonopodis pv. citri (strain 306), this protein is Histidine biosynthesis bifunctional protein HisB.